The sequence spans 94 residues: Small ribosomal subunit protein bS18 (94 aa).

It belongs to the bacterial ribosomal protein bS18 family. In terms of assembly, part of the 30S ribosomal subunit. Forms a tight heterodimer with protein bS6.

Functionally, binds as a heterodimer with protein bS6 to the central domain of the 16S rRNA, where it helps stabilize the platform of the 30S subunit. The polypeptide is Small ribosomal subunit protein bS18 (Leptothrix cholodnii (strain ATCC 51168 / LMG 8142 / SP-6) (Leptothrix discophora (strain SP-6))).